The chain runs to 63 residues: UPF0370 protein PC1_1167 (63 aa).

Residues 3 to 23 (WLADYWWIILIILIGMLINGI) traverse the membrane as a helical segment. A disordered region spans residues 37-63 (NKPKLPPHRDNNDKWDDEDDDWPKKKP).

This sequence belongs to the UPF0370 family.

It is found in the cell membrane. The polypeptide is UPF0370 protein PC1_1167 (Pectobacterium carotovorum subsp. carotovorum (strain PC1)).